Here is a 342-residue protein sequence, read N- to C-terminus: Cilia- and flagella-associated protein 36 (342 aa).

Residues S85 and S147 each carry the phosphoserine modification. Positions 150 to 187 (EHEEMKILREVLRKSKEEYDQEEERKRKKQLSEAKTEE) form a coiled coil. The interval 166-194 (EEYDQEEERKRKKQLSEAKTEEPTVHSSE) is disordered. Positions 179 to 189 (QLSEAKTEEPT) are enriched in basic and acidic residues. S201 carries the post-translational modification Phosphoserine. Disordered regions lie at residues 229 to 250 (RKVERSETSSLPQKDLKIPGLE) and 282 to 322 (KLMS…AEEK). Basic and acidic residues-rich tracts occupy residues 282–292 (KLMSMRKDMRT) and 300–322 (QKGKPTGEVEEMTEKPEMTAEEK).

The protein belongs to the CFAP36 family. As to quaternary structure, interacts with ARL3. Expressed in several human tissues including brain, testis, heart, lung, pancreas and spleen (at protein level).

Its subcellular location is the nucleus. It localises to the cytoplasm. The protein localises to the cell projection. It is found in the cilium. The protein resides in the flagellum. Functionally, may act as an effector for ARL3. The sequence is that of Cilia- and flagella-associated protein 36 (CFAP36) from Homo sapiens (Human).